The chain runs to 662 residues: 3',5'-cyclic-AMP phosphodiesterase, isoform F (662 aa).

Disordered stretches follow at residues 79-108 and 207-245; these read VPASNKSRRPNQSSSASRSGNPPGAPLSQG and SAGQYARSRSPRGPPMSQISGVKRPLSHTNSFTGERLPT. Over residues 80–98 the composition is skewed to polar residues; the sequence is PASNKSRRPNQSSSASRSG. The PDEase domain occupies 248-577; the sequence is VETPRENELG…DYYQSMIPPS (330 aa). Histidine 324 (proton donor) is an active-site residue. Position 324–328 (324–328) interacts with 3',5'-cyclic AMP; sequence HNSLH. Positions 328, 364, 365, and 482 each coordinate a divalent metal cation. 3',5'-cyclic AMP contacts are provided by aspartate 365, aspartate 482, and glutamine 533. A compositionally biased stretch (acidic residues) spans 599-616; the sequence is EESDQENLAELEEGDESG. The disordered stretch occupies residues 599–662; sequence EESDQENLAE…CQNQPQHGGM (64 aa). Residues 617 to 634 are compositionally biased toward low complexity; that stretch reads GESTTTGTTGTTAASALS. Residues 635-646 are compositionally biased toward gly residues; it reads GAGGGGGGGGGM. The span at 652-662 shows a compositional bias: polar residues; that stretch reads GCQNQPQHGGM.

The protein belongs to the cyclic nucleotide phosphodiesterase family. PDE4 subfamily. Monomer. A divalent metal cation is required as a cofactor.

The catalysed reaction is 3',5'-cyclic AMP + H2O = AMP + H(+). It functions in the pathway purine metabolism; 3',5'-cyclic AMP degradation; AMP from 3',5'-cyclic AMP: step 1/1. Functionally, hydrolyzes the second messenger cAMP, which is a key regulator of many important physiological processes. Vital for female fertility. Required for learning/memory. The polypeptide is 3',5'-cyclic-AMP phosphodiesterase, isoform F (Drosophila melanogaster (Fruit fly)).